The sequence spans 264 residues: Small ribosomal subunit protein uS2 (264 aa).

Positions 233–264 (AQTQAGGKAEQEAPATEEAADAQTEEAATPAE) are disordered.

The protein belongs to the universal ribosomal protein uS2 family.

The sequence is that of Small ribosomal subunit protein uS2 from Psychrobacter arcticus (strain DSM 17307 / VKM B-2377 / 273-4).